Here is a 441-residue protein sequence, read N- to C-terminus: FAM10 family protein At4g22670 (441 aa).

Residues 41 to 114 are disordered; that stretch reads KIPTGVHEED…PQKMGDSSVE (74 aa). Residues 46–55 are compositionally biased toward basic and acidic residues; it reads VHEEDKDTKP. Composition is skewed to acidic residues over residues 61 to 71 and 78 to 102; these read EESDDDMDETE and EEEE…EPDN. Residues S63 and S89 each carry the phosphoserine modification. 3 TPR repeats span residues 121 to 156, 158 to 190, and 191 to 224; these read EAAQ…NPTS, IMYG…NPDS, and AKGY…DYDE. Residues 236–285 adopt a coiled-coil conformation; sequence NAHKLEEHRRKYDRLRKEREDKKAERDRLRRRAEAQAAYDKAKKEEQSSS. A compositionally biased stretch (basic and acidic residues) spans 244–282; it reads RRKYDRLRKEREDKKAERDRLRRRAEAQAAYDKAKKEEQ. Positions 244–314 are disordered; it reads RRKYDRLRKE…MPGGFPGGMG (71 aa). Positions 289 to 314 are enriched in gly residues; the sequence is SGGGFPGGMPGGFPGGMPGGFPGGMG. The STI1 domain occupies 391 to 430; sequence DPELMTAFSDPEVMAALQDVMKNPANLAKHQANPKVAPVI.

The protein belongs to the FAM10 family.

The sequence is that of FAM10 family protein At4g22670 from Arabidopsis thaliana (Mouse-ear cress).